A 652-amino-acid polypeptide reads, in one-letter code: DNA ligase (652 aa).

NAD(+)-binding positions include 29–33 (DAEYD), 78–79 (SL), and Glu-107. The active-site N6-AMP-lysine intermediate is the Lys-109. NAD(+)-binding residues include Arg-130, Glu-164, Lys-278, and Lys-302. Zn(2+) contacts are provided by Cys-395, Cys-398, Cys-413, and Cys-418. In terms of domain architecture, BRCT spans 577–652 (DENAALSGMT…IKDEAWLESL (76 aa)).

It belongs to the NAD-dependent DNA ligase family. LigA subfamily. It depends on Mg(2+) as a cofactor. Mn(2+) serves as cofactor.

The catalysed reaction is NAD(+) + (deoxyribonucleotide)n-3'-hydroxyl + 5'-phospho-(deoxyribonucleotide)m = (deoxyribonucleotide)n+m + AMP + beta-nicotinamide D-nucleotide.. Functionally, DNA ligase that catalyzes the formation of phosphodiester linkages between 5'-phosphoryl and 3'-hydroxyl groups in double-stranded DNA using NAD as a coenzyme and as the energy source for the reaction. It is essential for DNA replication and repair of damaged DNA. The protein is DNA ligase of Streptococcus suis (strain 98HAH33).